We begin with the raw amino-acid sequence, 83 residues long: Cytochrome b559 subunit alpha (83 aa).

A helical membrane pass occupies residues 21 to 35 (VIHSITIPSLFIAGW). Histidine 23 is a heme binding site.

Belongs to the PsbE/PsbF family. In terms of assembly, heterodimer of an alpha subunit and a beta subunit. PSII is composed of 1 copy each of membrane proteins PsbA, PsbB, PsbC, PsbD, PsbE, PsbF, PsbH, PsbI, PsbJ, PsbK, PsbL, PsbM, PsbT, PsbX, PsbY, PsbZ, Psb30/Ycf12, at least 3 peripheral proteins of the oxygen-evolving complex and a large number of cofactors. It forms dimeric complexes. The cofactor is heme b.

The protein localises to the plastid. It is found in the chloroplast thylakoid membrane. This b-type cytochrome is tightly associated with the reaction center of photosystem II (PSII). PSII is a light-driven water:plastoquinone oxidoreductase that uses light energy to abstract electrons from H(2)O, generating O(2) and a proton gradient subsequently used for ATP formation. It consists of a core antenna complex that captures photons, and an electron transfer chain that converts photonic excitation into a charge separation. This chain is Cytochrome b559 subunit alpha, found in Piper cenocladum (Ant piper).